A 365-amino-acid chain; its full sequence is Succinyl-diaminopimelate desuccinylase (365 aa).

H65 contributes to the Zn(2+) binding site. Residue D67 is part of the active site. D96 contacts Zn(2+). Residue E126 is the Proton acceptor of the active site. Zn(2+) contacts are provided by E127, E155, and H340.

Belongs to the peptidase M20A family. DapE subfamily. Homodimer. Zn(2+) serves as cofactor. Co(2+) is required as a cofactor.

It catalyses the reaction N-succinyl-(2S,6S)-2,6-diaminopimelate + H2O = (2S,6S)-2,6-diaminopimelate + succinate. The protein operates within amino-acid biosynthesis; L-lysine biosynthesis via DAP pathway; LL-2,6-diaminopimelate from (S)-tetrahydrodipicolinate (succinylase route): step 3/3. Functionally, catalyzes the hydrolysis of N-succinyl-L,L-diaminopimelic acid (SDAP), forming succinate and LL-2,6-diaminopimelate (DAP), an intermediate involved in the bacterial biosynthesis of lysine and meso-diaminopimelic acid, an essential component of bacterial cell walls. The sequence is that of Succinyl-diaminopimelate desuccinylase from Campylobacter jejuni subsp. doylei (strain ATCC BAA-1458 / RM4099 / 269.97).